The chain runs to 192 residues: Leucine-rich repeat-containing protein 51 (192 aa).

3 LRR repeats span residues 49–71 (SLTQSLWLNNNVLNDLRDFNQVA), 80–101 (NLAWIDLSFNDLTSIDPVLTTF), and 103–124 (NLSVLYLHGNSIQRLGEVNKLA). The 39-residue stretch at 137–175 (NPMEEEKGYRQYVLCTLSRITTFDFSGVTKADRTTAEVW) folds into the LRRCT domain.

The protein localises to the cytoplasm. This is Leucine-rich repeat-containing protein 51 from Homo sapiens (Human).